We begin with the raw amino-acid sequence, 339 residues long: DNA-directed RNA polymerase subunit alpha (339 aa).

The segment at 1–237 (MENELMYMNW…EQMNVFINFD (237 aa)) is alpha N-terminal domain (alpha-NTD). The alpha C-terminal domain (alpha-CTD) stretch occupies residues 256 to 339 (FNENLYRSVN…PPAEDNKEGE (84 aa)).

Belongs to the RNA polymerase alpha chain family. As to quaternary structure, homodimer. The RNAP catalytic core consists of 2 alpha, 1 beta, 1 beta' and 1 omega subunit. When a sigma factor is associated with the core the holoenzyme is formed, which can initiate transcription.

It carries out the reaction RNA(n) + a ribonucleoside 5'-triphosphate = RNA(n+1) + diphosphate. Its function is as follows. DNA-dependent RNA polymerase catalyzes the transcription of DNA into RNA using the four ribonucleoside triphosphates as substrates. The chain is DNA-directed RNA polymerase subunit alpha from Desulfosudis oleivorans (strain DSM 6200 / JCM 39069 / Hxd3) (Desulfococcus oleovorans).